A 185-amino-acid polypeptide reads, in one-letter code: Cuticle protein 18.6, isoform B (185 aa).

Repeat copies occupy residues 21–24 (AAPA), 33–36 (AAPV), 41–44 (AAPV), 133–136 (AAPV), 139–142 (AAPV), and 150–153 (AAPV). In terms of domain architecture, Chitin-binding type R&amp;R spans 64 to 134 (HPQYSFAYNV…KEAGAHPAAA (71 aa)).

Component of the cuticle of migratory locust which contains more than 100 different structural proteins. This Locusta migratoria (Migratory locust) protein is Cuticle protein 18.6, isoform B.